The chain runs to 345 residues: RING finger protein 228 (345 aa).

The segment covering 1–21 (MAAPASDSGGSQQSPSSSPGS) has biased composition (low complexity). A disordered region spans residues 1–43 (MAAPASDSGGSQQSPSSSPGSREGAGVAAKGAPDCGDAGARDA). The segment at 58–125 (CKICYNYFDA…PGAIACPVCR (68 aa)) adopts an RING-type zinc-finger fold. The interval 159–213 (LPQDRLPPLPARLPAPAAAPPPTPAPPPPPSPAPPQPPPPPPAEDAAPGPRARPG) is disordered. The segment covering 163–201 (RLPPLPARLPAPAAAPPPTPAPPPPPSPAPPQPPPPPPA) has biased composition (pro residues). Low complexity predominate over residues 202–213 (EDAAPGPRARPG). Transmembrane regions (helical) follow at residues 236–256 (VCVVFSFLSMVVLLFTGLIFV) and 290–310 (LSVASILALFSVVVTWVICWL). Residues 319-345 (AGSTGGSGGGGGPRARAAAGGARRSDT) are disordered. The segment covering 321–331 (STGGSGGGGGP) has biased composition (gly residues). The span at 332-345 (RARAAAGGARRSDT) shows a compositional bias: low complexity.

It is found in the membrane. This is RING finger protein 228 from Homo sapiens (Human).